A 129-amino-acid chain; its full sequence is Trefoil factor 2 (129 aa).

Residues 1–23 form the signal peptide; sequence MGRRDAQLLAALLVLGLCALAGS. P-type domains lie at 29–73 and 79–122; these read CQCS…FHPL and DQCV…FFPK. Cystine bridges form between cysteine 29–cysteine 127, cysteine 31–cysteine 58, cysteine 42–cysteine 57, cysteine 52–cysteine 69, cysteine 81–cysteine 107, cysteine 91–cysteine 106, and cysteine 101–cysteine 118.

As to expression, stomach.

It localises to the secreted. In terms of biological role, inhibits gastrointestinal motility and gastric acid secretion. Could function as a structural component of gastric mucus, possibly by stabilizing glycoproteins in the mucus gel through interactions with carbohydrate side chains. This chain is Trefoil factor 2 (TFF2), found in Homo sapiens (Human).